Here is a 251-residue protein sequence, read N- to C-terminus: Octanoyltransferase (251 aa).

One can recognise a BPL/LPL catalytic domain in the interval 29 to 216 (GVIQDTLLLL…NFGFIFKEQV (188 aa)). Residues 74 to 81 (RGGDVTFH), 146 to 148 (AIG), and 159 to 161 (GFA) contribute to the substrate site. C177 acts as the Acyl-thioester intermediate in catalysis.

The protein belongs to the LipB family.

Its subcellular location is the cytoplasm. It carries out the reaction octanoyl-[ACP] + L-lysyl-[protein] = N(6)-octanoyl-L-lysyl-[protein] + holo-[ACP] + H(+). It functions in the pathway protein modification; protein lipoylation via endogenous pathway; protein N(6)-(lipoyl)lysine from octanoyl-[acyl-carrier-protein]: step 1/2. In terms of biological role, catalyzes the transfer of endogenously produced octanoic acid from octanoyl-acyl-carrier-protein onto the lipoyl domains of lipoate-dependent enzymes. Lipoyl-ACP can also act as a substrate although octanoyl-ACP is likely to be the physiological substrate. The chain is Octanoyltransferase from Koribacter versatilis (strain Ellin345).